A 134-amino-acid polypeptide reads, in one-letter code: MIEVGEYKVKEGLYYTKDHEWAQVLEDGTVLVGITDYAQKELGDLAYVELPEVGKEVSKGDVLCEVESVKAVSEVYAPVSGEVIEVNEELSDSPEKINEDPYGAWIAKIKPKNLEEELKELMDAEKYAEYLKTL.

Positions 29 to 110 constitute a Lipoyl-binding domain; it reads TVLVGITDYA…PYGAWIAKIK (82 aa). N6-lipoyllysine is present on lysine 70.

Belongs to the GcvH family. As to quaternary structure, the glycine cleavage system is composed of four proteins: P, T, L and H. Requires (R)-lipoate as cofactor.

In terms of biological role, the glycine cleavage system catalyzes the degradation of glycine. The H protein shuttles the methylamine group of glycine from the P protein to the T protein. The protein is Probable glycine cleavage system H protein of Pyrococcus horikoshii (strain ATCC 700860 / DSM 12428 / JCM 9974 / NBRC 100139 / OT-3).